The sequence spans 307 residues: MSHISVLLFETVESLLADRTTGVYIDATFGRGGHTRLLLSKLDENARVYAFDKDPQALEVAAALAQEDPRFTIIHASFADIKEKMQEIGVQSVDGIMADLGVSSPQLDQAERGFSFMQDGPLDMRMDNSKGLTAAEWLLEVEEEDLANIIYQYGEERYSRRIARAIKQAGKLDTTAQLAEIVKTAHPKWEKHKHPATRTFQAIRIAINKELDDIEVFLPQAVDLLKPKGRLSVISFHSLEDRLIKQFIQKESTLAEDSGWGMPQQQVDTRRLKKISRVRASEEEVKANPRSRSAWLRVAERLEQKGA.

Residues Gly-32–His-34, Asp-52, Phe-78, Asp-99, and Gln-106 each bind S-adenosyl-L-methionine.

Belongs to the methyltransferase superfamily. RsmH family.

The protein resides in the cytoplasm. It carries out the reaction cytidine(1402) in 16S rRNA + S-adenosyl-L-methionine = N(4)-methylcytidine(1402) in 16S rRNA + S-adenosyl-L-homocysteine + H(+). In terms of biological role, specifically methylates the N4 position of cytidine in position 1402 (C1402) of 16S rRNA. The chain is Ribosomal RNA small subunit methyltransferase H from Acinetobacter baumannii (strain AB307-0294).